A 172-amino-acid chain; its full sequence is Bcl-2-related protein A1 (172 aa).

The short motif at 77–97 (KEFEDGIINWGRIVTIFAFGG) is the BH1 element. A BH2 motif is present at residues 132–147 (EWIRQNGGWEDGFIKK).

Belongs to the Bcl-2 family. Interacts directly with BCL2L11/BIM and PMAIP1. Interacts directly with BAK1, BID, BMF and BBC3. Interacts with BOP. Interacts with isoform 3, isoform 4 and isoform 5 of ING4. Interacts with UBQLN4. As to expression, expressed in hemopoietic tissues, including bone marrow, spleen and thymus.

The protein localises to the cytoplasm. In terms of biological role, retards apoptosis induced by IL-3 deprivation. May function in the response of hemopoietic cells to external signals and in maintaining endothelial survival during infection. Can inhibit apoptosis induced by serum starvation in the mammary epithelial cell line HC11. The sequence is that of Bcl-2-related protein A1 (Bcl2a1) from Mus musculus (Mouse).